We begin with the raw amino-acid sequence, 373 residues long: Acyl-CoA dehydrogenase FadE27 (373 aa).

Residues Arg-251, His-327, and Gly-331 each coordinate FAD.

This sequence belongs to the acyl-CoA dehydrogenase family. Heterotetramer (dimer of heterodimers) composed of FadE26 and FadE27. Requires FAD as cofactor.

The enzyme catalyses (25S)-3-oxocholest-4-en-26-oyl-CoA + A = 3-oxo-cholest-4,24-dien-26-oyl-CoA + AH2. Its pathway is steroid metabolism; cholesterol degradation. Its activity is regulated as follows. Uncompetitively inhibited by high concentration of 3-OCS-CoA. Involved in the first cycle of side chain dehydrogenation in the beta-oxidation of cholesterol catabolism. It contributes partly to the virulence by increasing the efficiency of beta-oxidation. Catalyzes the dehydrogenation of acyl-CoA ester side chains of (25S)-3-oxo-cholest-4-en-26-oyl-CoA (3-OCS-CoA) to yield (24E)-3-oxo-cholest-4,24-dien-26-oyl-CoA. Also able to dehydrogenate steroyl-CoA such as 3-oxo-chol-4-en-24-oyl-CoA (3-OCO-CoA) as well as 3-oxo-4-pregnene-20-carboxyl-CoA (3-OPC-CoA). It dehydrogenates only (25S)-OCS-CoA diastereomer. This chain is Acyl-CoA dehydrogenase FadE27 (fadE27), found in Mycobacterium tuberculosis (strain ATCC 25618 / H37Rv).